The following is a 640-amino-acid chain: Translation factor GUF1, mitochondrial (640 aa).

A mitochondrion-targeting transit peptide spans 1-26 (MRRLRSLYLQSSICFRRFNHYSAKDT). In terms of domain architecture, tr-type G spans 39–223 (ENYRNFSIVA…AIIDRIPPPT (185 aa)). GTP-binding positions include 48 to 55 (AHVDHGKS), 115 to 119 (DTPGH), and 169 to 172 (NKID).

This sequence belongs to the TRAFAC class translation factor GTPase superfamily. Classic translation factor GTPase family. LepA subfamily.

It is found in the mitochondrion inner membrane. The catalysed reaction is GTP + H2O = GDP + phosphate + H(+). Its function is as follows. Promotes mitochondrial protein synthesis. May act as a fidelity factor of the translation reaction, by catalyzing a one-codon backward translocation of tRNAs on improperly translocated ribosomes. Binds to mitochondrial ribosomes in a GTP-dependent manner. The chain is Translation factor GUF1, mitochondrial from Lachancea thermotolerans (strain ATCC 56472 / CBS 6340 / NRRL Y-8284) (Yeast).